Reading from the N-terminus, the 620-residue chain is Siderophore iron transporter ARN2 (620 aa).

Residues 1–42 (MIEVPEDNRSSQTKRKNTEKNCNELMVDEKMDDDSSPRDEMK) form a disordered region. Residues 16 to 42 (KNTEKNCNELMVDEKMDDDSSPRDEMK) are compositionally biased toward basic and acidic residues. The next 14 membrane-spanning stretches (helical) occupy residues 71–93 (IFLF…RGTY), 106–128 (LIST…FGGL), 135–152 (LTLF…TIIQ), 162–184 (AAGA…LMLS), 191–213 (WRLF…SGSV), 223–245 (WSWN…ILCM), 286–308 (VVGV…LAGG), 318–335 (IIGP…FIYW), 355–377 (VWAP…GYLY), 392–414 (TRII…LIVT), 421–438 (SYII…GLFY), 448–470 (GGII…PTIV), 491–513 (VFRI…SLYP), and 561–578 (VIVA…TFCV).

This sequence belongs to the major facilitator superfamily.

It localises to the endosome membrane. Involved in the transport of siderophore triacestylfusarinine C and so has a role in iron homeostasis. The sequence is that of Siderophore iron transporter ARN2 (ARN2) from Saccharomyces cerevisiae (strain ATCC 204508 / S288c) (Baker's yeast).